The following is a 306-amino-acid chain: Putative F-box protein At1g47300 (306 aa).

The F-box domain occupies 1–45 (MISDSIPKELILEIMLRLPAKSIARFHCVSKQWASMLSRPYFTEL). Positions 235-278 (DPKLLESKEEEEEEEEEEEEEEEEEEEEEEEEEEEESKEREKEK) are disordered. Positions 242 to 270 (KEEEEEEEEEEEEEEEEEEEEEEEEEEEE) are enriched in acidic residues.

The sequence is that of Putative F-box protein At1g47300 from Arabidopsis thaliana (Mouse-ear cress).